The sequence spans 105 residues: Met repressor (105 aa).

It belongs to the MetJ family. In terms of assembly, homodimer.

It is found in the cytoplasm. This regulatory protein, when combined with SAM (S-adenosylmethionine) represses the expression of the methionine regulon and of enzymes involved in SAM synthesis. The chain is Met repressor from Salmonella dublin (strain CT_02021853).